Reading from the N-terminus, the 83-residue chain is Hainantoxin-III 7 (83 aa).

Residues 1-21 (MKASMFLALAGLVLLFVVGYA) form the signal peptide. Residues 22–48 (SESEEKEFPRELLSKVFAVDDFKGEER) constitute a propeptide that is removed on maturation. Intrachain disulfides connect Cys50–Cys65, Cys57–Cys70, and Cys64–Cys77. Position 81 is a leucine amide (Leu81).

This sequence belongs to the neurotoxin 10 (Hwtx-1) family. 15 (Hntx-3) subfamily. Monomer. In terms of tissue distribution, expressed by the venom gland.

It is found in the secreted. Selective antagonist of neuronal tetrodotoxin (TTX)-sensitive voltage-gated sodium channels (IC(50)=1270 nM on Nav1.1/SCN1A, 270 nM on Nav1.2/SCN2A, 491 nM on Nav1.3/SCN3A and 232 nM on Nav1.7/SCN9A). This toxin suppress Nav1.7 current amplitude without significantly altering the activation, inactivation, and repriming kinetics. Short extreme depolarizations partially activate the toxin-bound channel, indicating voltage-dependent inhibition of this toxin. This toxin increases the deactivation of the Nav1.7 current after extreme depolarizations. The toxin-Nav1.7 complex is gradually dissociated upon prolonged strong depolarizations in a voltage-dependent manner, and the unbound toxin rebinds to Nav1.7 after a long repolarization. Moreover, analysis of chimeric channels showed that the DIIS3-S4 linker is critical for toxin binding to Nav1.7. These data are consistent with this toxin interacting with Nav1.7 site 4 and trapping the domain II voltage sensor in the closed state. The polypeptide is Hainantoxin-III 7 (Cyriopagopus hainanus (Chinese bird spider)).